The sequence spans 66 residues: Large ribosomal subunit protein bL35 (66 aa).

Positions 19–45 are disordered; sequence SGKVVAAQSTKRHGMTKRSKRSLRTRR. Positions 28–45 are enriched in basic residues; the sequence is TKRHGMTKRSKRSLRTRR.

The protein belongs to the bacterial ribosomal protein bL35 family.

This Anaplasma phagocytophilum (strain HZ) protein is Large ribosomal subunit protein bL35.